The primary structure comprises 237 residues: tRNA (guanine-N(1)-)-methyltransferase (237 aa).

S-adenosyl-L-methionine-binding positions include Gly-113 and 133-138 (MGDYIL).

Belongs to the RNA methyltransferase TrmD family. Homodimer.

The protein resides in the cytoplasm. The catalysed reaction is guanosine(37) in tRNA + S-adenosyl-L-methionine = N(1)-methylguanosine(37) in tRNA + S-adenosyl-L-homocysteine + H(+). In terms of biological role, specifically methylates guanosine-37 in various tRNAs. The polypeptide is tRNA (guanine-N(1)-)-methyltransferase (Wolinella succinogenes (strain ATCC 29543 / DSM 1740 / CCUG 13145 / JCM 31913 / LMG 7466 / NCTC 11488 / FDC 602W) (Vibrio succinogenes)).